We begin with the raw amino-acid sequence, 443 residues long: Methylenetetrahydrofolate--tRNA-(uracil-5-)-methyltransferase TrmFO (443 aa).

Position 8–13 (8–13 (GAGLAG)) interacts with FAD.

The protein belongs to the MnmG family. TrmFO subfamily. FAD serves as cofactor.

It localises to the cytoplasm. The enzyme catalyses uridine(54) in tRNA + (6R)-5,10-methylene-5,6,7,8-tetrahydrofolate + NADH + H(+) = 5-methyluridine(54) in tRNA + (6S)-5,6,7,8-tetrahydrofolate + NAD(+). It catalyses the reaction uridine(54) in tRNA + (6R)-5,10-methylene-5,6,7,8-tetrahydrofolate + NADPH + H(+) = 5-methyluridine(54) in tRNA + (6S)-5,6,7,8-tetrahydrofolate + NADP(+). Functionally, catalyzes the folate-dependent formation of 5-methyl-uridine at position 54 (M-5-U54) in all tRNAs. The chain is Methylenetetrahydrofolate--tRNA-(uracil-5-)-methyltransferase TrmFO from Thermus thermophilus (strain ATCC BAA-163 / DSM 7039 / HB27).